Here is a 196-residue protein sequence, read N- to C-terminus: Holliday junction branch migration complex subunit RuvA (196 aa).

A domain I region spans residues 1 to 63; it reads MIASVRGEVI…EDSMTLYGFA (63 aa). Positions 64–142 are domain II; the sequence is DADARDLFGT…PVTTGAGVTA (79 aa). Positions 143–151 are flexible linker; that stretch reads VGGHAVRGP. The segment at 151-196 is domain III; that stretch reads PVVEALVGLGFAAKQAEEACDKVLAADPDATTSSALRAALSMLGKK.

The protein belongs to the RuvA family. Homotetramer. Forms an RuvA(8)-RuvB(12)-Holliday junction (HJ) complex. HJ DNA is sandwiched between 2 RuvA tetramers; dsDNA enters through RuvA and exits via RuvB. An RuvB hexamer assembles on each DNA strand where it exits the tetramer. Each RuvB hexamer is contacted by two RuvA subunits (via domain III) on 2 adjacent RuvB subunits; this complex drives branch migration. In the full resolvosome a probable DNA-RuvA(4)-RuvB(12)-RuvC(2) complex forms which resolves the HJ.

Its subcellular location is the cytoplasm. Its function is as follows. The RuvA-RuvB-RuvC complex processes Holliday junction (HJ) DNA during genetic recombination and DNA repair, while the RuvA-RuvB complex plays an important role in the rescue of blocked DNA replication forks via replication fork reversal (RFR). RuvA specifically binds to HJ cruciform DNA, conferring on it an open structure. The RuvB hexamer acts as an ATP-dependent pump, pulling dsDNA into and through the RuvAB complex. HJ branch migration allows RuvC to scan DNA until it finds its consensus sequence, where it cleaves and resolves the cruciform DNA. This is Holliday junction branch migration complex subunit RuvA from Mycobacterium sp. (strain JLS).